We begin with the raw amino-acid sequence, 78 residues long: Ubiquinol-cytochrome-c reductase complex assembly factor 3 (78 aa).

Topologically, residues M1–R5 are mitochondrial matrix. Residues I6–P26 traverse the membrane as a helical segment. The Mitochondrial intermembrane portion of the chain corresponds to G27–K78.

The protein belongs to the UQCC3 family. As to quaternary structure, associates with the ubiquinol-cytochrome c reductase complex (mitochondrial respiratory chain complex III or cytochrome b-c1 complex).

It is found in the mitochondrion inner membrane. Its function is as follows. Required for the assembly of the ubiquinol-cytochrome c reductase complex (mitochondrial respiratory chain complex III or cytochrome b-c1 complex), mediating cytochrome b recruitment and probably stabilization within the complex. Thereby, plays an important role in ATP production by mitochondria. Cardiolipin-binding protein, it may also control the cardiolipin composition of mitochondria membranes and their morphology. The polypeptide is Ubiquinol-cytochrome-c reductase complex assembly factor 3 (Danio rerio (Zebrafish)).